Reading from the N-terminus, the 350-residue chain is Putative deoxyribonuclease-2 (350 aa).

This sequence belongs to the DNase II family.

The protein is Putative deoxyribonuclease-2 of Burkholderia thailandensis (strain ATCC 700388 / DSM 13276 / CCUG 48851 / CIP 106301 / E264).